We begin with the raw amino-acid sequence, 84 residues long: ATP synthase subunit c (84 aa).

Transmembrane regions (helical) follow at residues 8 to 28 (VAGM…GGGI) and 56 to 76 (IIGS…AILL).

It belongs to the ATPase C chain family. In terms of assembly, F-type ATPases have 2 components, F(1) - the catalytic core - and F(0) - the membrane proton channel. F(1) has five subunits: alpha(3), beta(3), gamma(1), delta(1), epsilon(1). F(0) has three main subunits: a(1), b(2) and c(10-14). The alpha and beta chains form an alternating ring which encloses part of the gamma chain. F(1) is attached to F(0) by a central stalk formed by the gamma and epsilon chains, while a peripheral stalk is formed by the delta and b chains.

Its subcellular location is the cell membrane. Its function is as follows. F(1)F(0) ATP synthase produces ATP from ADP in the presence of a proton or sodium gradient. F-type ATPases consist of two structural domains, F(1) containing the extramembraneous catalytic core and F(0) containing the membrane proton channel, linked together by a central stalk and a peripheral stalk. During catalysis, ATP synthesis in the catalytic domain of F(1) is coupled via a rotary mechanism of the central stalk subunits to proton translocation. In terms of biological role, key component of the F(0) channel; it plays a direct role in translocation across the membrane. A homomeric c-ring of between 10-14 subunits forms the central stalk rotor element with the F(1) delta and epsilon subunits. This chain is ATP synthase subunit c, found in Clostridium novyi (strain NT).